The sequence spans 679 residues: UvrABC system protein B (679 aa).

Positions 25–190 constitute a Helicase ATP-binding domain; it reads EGVNQGQRYQ…SRNDFDITRG (166 aa). 38–45 contacts ATP; the sequence is GATGTGKT. The Beta-hairpin signature appears at 91–114; sequence YYDYYQPEAYVPVSDTYIAKTASI. The Helicase C-terminal domain maps to 429 to 591; it reads QVDDLLAEIR…IVPRPAGKRA (163 aa). The 36-residue stretch at 639 to 674 folds into the UVR domain; the sequence is PELIDQLETKMKEAAKNLNFEEAASLRDRIKKFRQK.

This sequence belongs to the UvrB family. In terms of assembly, forms a heterotetramer with UvrA during the search for lesions. Interacts with UvrC in an incision complex.

The protein resides in the cytoplasm. Its function is as follows. The UvrABC repair system catalyzes the recognition and processing of DNA lesions. A damage recognition complex composed of 2 UvrA and 2 UvrB subunits scans DNA for abnormalities. Upon binding of the UvrA(2)B(2) complex to a putative damaged site, the DNA wraps around one UvrB monomer. DNA wrap is dependent on ATP binding by UvrB and probably causes local melting of the DNA helix, facilitating insertion of UvrB beta-hairpin between the DNA strands. Then UvrB probes one DNA strand for the presence of a lesion. If a lesion is found the UvrA subunits dissociate and the UvrB-DNA preincision complex is formed. This complex is subsequently bound by UvrC and the second UvrB is released. If no lesion is found, the DNA wraps around the other UvrB subunit that will check the other stand for damage. The chain is UvrABC system protein B from Prochlorococcus marinus (strain MIT 9303).